The sequence spans 130 residues: Con-Ins G2 (130 aa).

The first 24 residues, 1 to 24, serve as a signal peptide directing secretion; the sequence is MTTSSYFLLVALGLLLYVRQSFST. 4 disulfide bridges follow: cysteine 29–cysteine 100, cysteine 41–cysteine 103, cysteine 53–cysteine 116, and cysteine 102–cysteine 107. A 4-hydroxyproline; partial modification is found at proline 34. Residues 54–74 form a disordered region; sequence EEEEARRGGTNDGGKKRRRAS. A propeptide spans 59-92 (c peptide); sequence RRGGTNDGGKKRRRASPLWKRRRFLSMLKARAKR. Glutamate 111 is subject to 4-carboxyglutamate; partial.

This sequence belongs to the insulin family. As to quaternary structure, heterodimer of A and B chains; disulfide-linked. Expressed by the venom gland.

It is found in the secreted. In terms of biological role, this venom insulin, from a fish-hunting cone snail, facilitates prey capture by rapidly inducing hypoglycemic shock. Intraperitoneal injection of this peptide into zebrafish lowers blood glucose with the same potency than human insulin. In vivo, when applied to water, this peptide reduces overall locomotor activity of zebrafish larvae, observed as a significant decrease in the percentage of time spent swimming and movement frequency. The chain is Con-Ins G2 from Conus geographus (Geography cone).